The following is a 330-amino-acid chain: 2-alkyl-3-oxoalkanoate reductase (330 aa).

Catalysis depends on Y139, which acts as the Proton acceptor. K143 is a binding site for NADP(+).

It belongs to the 3-beta-HSD family. As to quaternary structure, homodimer.

It carries out the reaction a (2R,3S)-2-alkyl-3-hydroxyalkanoate + NADP(+) = an (R)-2-alkyl-3-oxoalkanoate + NADPH + H(+). Involved in olefin biosynthesis. Catalyzes the reversible stereospecific NADPH-dependent reduction of 2-alkyl-3-oxoalkanoic acids to 2-alkyl-3-hydroxyalkanoic acids. In the oxidative direction, syn-2-decyl-3-hydroxytetradecanoic acid is the preferred substrate. In the reductive direction, (2R/S)-2-hexyl-3-ketodecanoic acid is accepted as substrate. The protein is 2-alkyl-3-oxoalkanoate reductase of Stenotrophomonas maltophilia (strain K279a).